Consider the following 127-residue polypeptide: Small ribosomal subunit protein eS8 (127 aa).

Residues 1-24 (MKWQGKSARKPTGGRLVPARGKRK) form a disordered region.

This sequence belongs to the eukaryotic ribosomal protein eS8 family. In terms of assembly, part of the 30S ribosomal subunit.

This is Small ribosomal subunit protein eS8 from Methanothrix thermoacetophila (strain DSM 6194 / JCM 14653 / NBRC 101360 / PT) (Methanosaeta thermophila).